Consider the following 249-residue polypeptide: 5'-nucleotidase SurE (249 aa).

The a divalent metal cation site is built by Asp-8, Asp-9, Ser-39, and Asn-91.

The protein belongs to the SurE nucleotidase family. The cofactor is a divalent metal cation.

It localises to the cytoplasm. The enzyme catalyses a ribonucleoside 5'-phosphate + H2O = a ribonucleoside + phosphate. Functionally, nucleotidase that shows phosphatase activity on nucleoside 5'-monophosphates. The sequence is that of 5'-nucleotidase SurE from Pseudomonas fluorescens (strain Pf0-1).